The sequence spans 248 residues: 2-C-methyl-D-erythritol 4-phosphate cytidylyltransferase (248 aa).

The protein belongs to the IspD/TarI cytidylyltransferase family. IspD subfamily.

It carries out the reaction 2-C-methyl-D-erythritol 4-phosphate + CTP + H(+) = 4-CDP-2-C-methyl-D-erythritol + diphosphate. It functions in the pathway isoprenoid biosynthesis; isopentenyl diphosphate biosynthesis via DXP pathway; isopentenyl diphosphate from 1-deoxy-D-xylulose 5-phosphate: step 2/6. Its function is as follows. Catalyzes the formation of 4-diphosphocytidyl-2-C-methyl-D-erythritol from CTP and 2-C-methyl-D-erythritol 4-phosphate (MEP). This is 2-C-methyl-D-erythritol 4-phosphate cytidylyltransferase from Corynebacterium efficiens (strain DSM 44549 / YS-314 / AJ 12310 / JCM 11189 / NBRC 100395).